The following is a 295-amino-acid chain: HTH-type transcriptional regulator TfdS (295 aa).

Residues Met1–Thr58 form the HTH lysR-type domain. Positions Val18–His37 form a DNA-binding region, H-T-H motif.

The protein belongs to the LysR transcriptional regulatory family.

The protein localises to the cytoplasm. Involved in the regulation of 3-chlorocatechol degradation. Transcriptional regulator of tfdB expression. Acts as a repressor in the absence of its effector (either 2-cis-chlorodiene lactone or chloromaleylacetate) but acts as an activator when its effector is present. This chain is HTH-type transcriptional regulator TfdS (tfdS), found in Cupriavidus pinatubonensis (strain JMP 134 / LMG 1197) (Cupriavidus necator (strain JMP 134)).